Here is a 115-residue protein sequence, read N- to C-terminus: MAENVTSAKATAKMVRVSSRKVRLVLDTIRNKSVAEAFAILKFTPNGAASDVEKVLKSAVANAENNFDLDQASLVVSEAFANEGPTLKRFRPRAKGSASPINKRTSHITVVVAEK.

Belongs to the universal ribosomal protein uL22 family. Part of the 50S ribosomal subunit.

Functionally, this protein binds specifically to 23S rRNA; its binding is stimulated by other ribosomal proteins, e.g. L4, L17, and L20. It is important during the early stages of 50S assembly. It makes multiple contacts with different domains of the 23S rRNA in the assembled 50S subunit and ribosome. In terms of biological role, the globular domain of the protein is located near the polypeptide exit tunnel on the outside of the subunit, while an extended beta-hairpin is found that lines the wall of the exit tunnel in the center of the 70S ribosome. The sequence is that of Large ribosomal subunit protein uL22 from Limosilactobacillus fermentum (strain NBRC 3956 / LMG 18251) (Lactobacillus fermentum).